The sequence spans 328 residues: UDP-glucose 4-epimerase (328 aa).

Thr119 is a substrate binding site. Tyr143 serves as the catalytic Proton acceptor.

It belongs to the NAD(P)-dependent epimerase/dehydratase family. NAD(+) serves as cofactor.

It catalyses the reaction UDP-alpha-D-glucose = UDP-alpha-D-galactose. Its pathway is carbohydrate metabolism; galactose metabolism. The protein operates within glycan metabolism; exopolysaccharide biosynthesis. This chain is UDP-glucose 4-epimerase (exoB), found in Rhizobium meliloti (strain 1021) (Ensifer meliloti).